The following is a 664-amino-acid chain: DNA ligase (664 aa).

NAD(+) contacts are provided by residues 31-35 (DSTYD), 80-81 (SL), and Glu110. Lys112 acts as the N6-AMP-lysine intermediate in catalysis. Residues Arg133, Glu167, Lys282, and Lys306 each coordinate NAD(+). Zn(2+) contacts are provided by Cys400, Cys403, Cys418, and Cys423. The 82-residue stretch at 583–664 (QSNAPLAGKT…LLEELAKYEG (82 aa)) folds into the BRCT domain.

This sequence belongs to the NAD-dependent DNA ligase family. LigA subfamily. Requires Mg(2+) as cofactor. It depends on Mn(2+) as a cofactor.

The enzyme catalyses NAD(+) + (deoxyribonucleotide)n-3'-hydroxyl + 5'-phospho-(deoxyribonucleotide)m = (deoxyribonucleotide)n+m + AMP + beta-nicotinamide D-nucleotide.. Functionally, DNA ligase that catalyzes the formation of phosphodiester linkages between 5'-phosphoryl and 3'-hydroxyl groups in double-stranded DNA using NAD as a coenzyme and as the energy source for the reaction. It is essential for DNA replication and repair of damaged DNA. In Exiguobacterium sibiricum (strain DSM 17290 / CCUG 55495 / CIP 109462 / JCM 13490 / 255-15), this protein is DNA ligase.